A 418-amino-acid chain; its full sequence is MAHTLAQKILQAHTDEAITAAGQIVRCRVSLALANDITAPLAIKSFRAMGAKKVFDRDKVALVMDHFTPQKDIASAQQVKLTREFAREMGVTHYYEGGDCGVEHALLPELGLVGPGDVVVGADSHTCTYGGLGAFATGFGSTDVAGAMALGETWFKVPPTIRATFTGTLPKWVGAKDLILRLIGEIGVDGALYRALEFDGAAIEALSVEGRMTIANMAIEAGGKAGLFAADAKTLAYTAARGRKDAPLSADPGATYERELTFDVSGMEPLVACPHLPENVKPVGEVRGVTLDQVVIGSCTNGRISDMREAAEVLKGRKVAKGVRCIVLPATPGVWKEALKEGLIETFMESGCIVGPATCGPCLGGHMGILADGERAIATTNRNFRGRMGSLESEVYLASPAVAAASAVAGIIAHPGSL.

The [4Fe-4S] cluster site is built by Cys299, Cys359, and Cys362.

This sequence belongs to the aconitase/IPM isomerase family. LeuC type 2 subfamily. As to quaternary structure, heterodimer of LeuC and LeuD. [4Fe-4S] cluster serves as cofactor.

The catalysed reaction is (2R,3S)-3-isopropylmalate = (2S)-2-isopropylmalate. It participates in amino-acid biosynthesis; L-leucine biosynthesis; L-leucine from 3-methyl-2-oxobutanoate: step 2/4. In terms of biological role, catalyzes the isomerization between 2-isopropylmalate and 3-isopropylmalate, via the formation of 2-isopropylmaleate. The chain is 3-isopropylmalate dehydratase large subunit from Nitratidesulfovibrio vulgaris (strain DSM 19637 / Miyazaki F) (Desulfovibrio vulgaris).